Here is a 317-residue protein sequence, read N- to C-terminus: N-acetylmuramoyl-L-alanine amidase XlyB (317 aa).

The N-terminal stretch at 1–39 (MSIPVKKNLVSEAKYALKCPNAMSAEYITIHNTANDASA) is a signal peptide. An N-acetylmuramoyl-L-alanine amidase domain is found at 40-142 (ANEISYMIGN…QDWSGKYCPH (103 aa)). The LysM domain occupies 177–221 (SEYHVKKGDTLSGIAASHGASVKTLQSINHITDPNHIKIGQVIKL).

The protein belongs to the N-acetylmuramoyl-L-alanine amidase 2 family.

The protein localises to the secreted. The enzyme catalyses Hydrolyzes the link between N-acetylmuramoyl residues and L-amino acid residues in certain cell-wall glycopeptides.. In terms of biological role, autolysins are involved in some important biological processes such as cell separation, cell-wall turnover, competence for genetic transformation, formation of the flagella and sporulation. The chain is N-acetylmuramoyl-L-alanine amidase XlyB (xlyB) from Bacillus subtilis (strain 168).